The primary structure comprises 345 residues: Glycerol-3-phosphate dehydrogenase [NAD(P)+] (345 aa).

Residues S11, W12, H32, R33, and K106 each coordinate NADPH. K106, G137, and S139 together coordinate sn-glycerol 3-phosphate. A141 provides a ligand contact to NADPH. The sn-glycerol 3-phosphate site is built by K192, D245, S255, R256, and N257. Catalysis depends on K192, which acts as the Proton acceptor. R256 provides a ligand contact to NADPH. NADPH is bound by residues V280 and E282.

It belongs to the NAD-dependent glycerol-3-phosphate dehydrogenase family.

It localises to the cytoplasm. The enzyme catalyses sn-glycerol 3-phosphate + NAD(+) = dihydroxyacetone phosphate + NADH + H(+). It carries out the reaction sn-glycerol 3-phosphate + NADP(+) = dihydroxyacetone phosphate + NADPH + H(+). It participates in membrane lipid metabolism; glycerophospholipid metabolism. Functionally, catalyzes the reduction of the glycolytic intermediate dihydroxyacetone phosphate (DHAP) to sn-glycerol 3-phosphate (G3P), the key precursor for phospholipid synthesis. The chain is Glycerol-3-phosphate dehydrogenase [NAD(P)+] from Bacillus pumilus (strain SAFR-032).